The chain runs to 1241 residues: Dinoflagellate luciferase (1241 aa).

3 luciferase regions span residues 114–465 (KTGL…IKRD), 491–842 (DQGF…TKRD), and 868–1218 (EKGF…KKRD).

The protein belongs to the calycin superfamily. Luciferase family.

Its subcellular location is the cytoplasmic vesicle. It catalyses the reaction dinoflagellate luciferin + O2 = oxidized dinoflagellate luciferin + hnu + H2O + H(+). Regulated by pH: upon acidification, at a pH of 6.3, dinoflagellate luciferin is released from luciferin-binding protein LBP, allowing the interaction between Dinoflagellate luciferase and its substrate luciferin. Functionally, emits blue light flashes with a wavelength of 475 nm during the night phase. The protein is Dinoflagellate luciferase of Lingulodinium polyedra (Dinoflagellate).